A 319-amino-acid polypeptide reads, in one-letter code: Transaldolase (319 aa).

Residue Lys-131 is the Schiff-base intermediate with substrate of the active site.

Belongs to the transaldolase family. Type 1 subfamily. In terms of assembly, homodimer.

The protein resides in the cytoplasm. It catalyses the reaction D-sedoheptulose 7-phosphate + D-glyceraldehyde 3-phosphate = D-erythrose 4-phosphate + beta-D-fructose 6-phosphate. The protein operates within carbohydrate degradation; pentose phosphate pathway; D-glyceraldehyde 3-phosphate and beta-D-fructose 6-phosphate from D-ribose 5-phosphate and D-xylulose 5-phosphate (non-oxidative stage): step 2/3. Functionally, transaldolase is important for the balance of metabolites in the pentose-phosphate pathway. The sequence is that of Transaldolase from Wigglesworthia glossinidia brevipalpis.